A 128-amino-acid chain; its full sequence is Protein ripply2 (128 aa).

The segment at 1–63 (MENAGGAEGT…HAAEAMPDGP (63 aa)) is disordered. Residues 9-22 (GTESGAAACAATDG) show a composition bias toward low complexity. The short motif at 37–40 (WRPW) is the WRPW motif element. Residues 77–112 (HPVRLFWPKSKCYDYLYQEAEALLKNFPIQATISFY) are ripply homology domain.

Belongs to the ripply family.

Its subcellular location is the nucleus. In terms of biological role, plays a role in somitogenesis. Required for somite segregation and establishment of rostrocaudal polarity in somites. This chain is Protein ripply2 (RIPPLY2), found in Homo sapiens (Human).